The chain runs to 133 residues: ATP synthase epsilon chain (133 aa).

It belongs to the ATPase epsilon chain family. F-type ATPases have 2 components, CF(1) - the catalytic core - and CF(0) - the membrane proton channel. CF(1) has five subunits: alpha(3), beta(3), gamma(1), delta(1), epsilon(1). CF(0) has three main subunits: a, b and c.

The protein resides in the cell membrane. Functionally, produces ATP from ADP in the presence of a proton gradient across the membrane. In Lawsonia intracellularis (strain PHE/MN1-00), this protein is ATP synthase epsilon chain.